Reading from the N-terminus, the 230-residue chain is Ion-translocating oxidoreductase complex subunit E (230 aa).

5 helical membrane-spanning segments follow: residues 22–42, 63–83, 86–106, 125–145, and 182–202; these read LLGL…LGLG, TPAE…VSAV, LINA…PLIV, WLSA…MFVL, and PFLL…MLAV.

It belongs to the NqrDE/RnfAE family. In terms of assembly, the complex is composed of six subunits: RsxA, RsxB, RsxC, RsxD, RsxE and RsxG.

It localises to the cell inner membrane. Its function is as follows. Part of a membrane-bound complex that couples electron transfer with translocation of ions across the membrane. Required to maintain the reduced state of SoxR. The chain is Ion-translocating oxidoreductase complex subunit E from Salmonella paratyphi A (strain ATCC 9150 / SARB42).